Reading from the N-terminus, the 651-residue chain is p-hydroxybenzoic acid efflux pump subunit AaeB (651 aa).

11 consecutive transmembrane segments (helical) span residues 11–31 (FAFK…HLQL), 41–61 (AAIV…SGAI), 67–87 (LRII…VLTI), 91–111 (VLTL…SSLV), 119–139 (FGLA…TPLL), 150–170 (EIVL…PRSI), 368–388 (LFWL…IAVV), 405–425 (FLLG…FIIP), 429–449 (QSML…GIEV), 460–480 (LAST…VSLF), and 481–501 (LDSA…LLLI).

This sequence belongs to the aromatic acid exporter ArAE (TC 2.A.85) family.

The protein resides in the cell inner membrane. In terms of biological role, forms an efflux pump with AaeA. Could function as a metabolic relief valve, allowing to eliminate certain compounds when they accumulate to high levels in the cell. This Yersinia enterocolitica serotype O:8 / biotype 1B (strain NCTC 13174 / 8081) protein is p-hydroxybenzoic acid efflux pump subunit AaeB.